A 134-amino-acid polypeptide reads, in one-letter code: NADPH-dependent 7-cyano-7-deazaguanine reductase (134 aa).

Cysteine 48 acts as the Thioimide intermediate in catalysis. The Proton donor role is filled by aspartate 55. Substrate contacts are provided by residues 70–72 and 89–90; these read VEL and QE.

The protein belongs to the GTP cyclohydrolase I family. QueF type 1 subfamily.

The protein localises to the cytoplasm. It catalyses the reaction 7-aminomethyl-7-carbaguanine + 2 NADP(+) = 7-cyano-7-deazaguanine + 2 NADPH + 3 H(+). It participates in tRNA modification; tRNA-queuosine biosynthesis. Catalyzes the NADPH-dependent reduction of 7-cyano-7-deazaguanine (preQ0) to 7-aminomethyl-7-deazaguanine (preQ1). The protein is NADPH-dependent 7-cyano-7-deazaguanine reductase of Caldanaerobacter subterraneus subsp. tengcongensis (strain DSM 15242 / JCM 11007 / NBRC 100824 / MB4) (Thermoanaerobacter tengcongensis).